Reading from the N-terminus, the 120-residue chain is NAD(P)H-quinone oxidoreductase subunit 3, chloroplastic (120 aa).

3 helical membrane-spanning segments follow: residues 9-29 (IFWAFLIISSIIPILAFLISG), 64-84 (MFALVFVVFDVETVFLYPWAM), and 88-108 (VLGVSVFIEALIFVLIPIVGL).

Belongs to the complex I subunit 3 family. As to quaternary structure, NDH is composed of at least 16 different subunits, 5 of which are encoded in the nucleus.

Its subcellular location is the plastid. It is found in the chloroplast thylakoid membrane. The catalysed reaction is a plastoquinone + NADH + (n+1) H(+)(in) = a plastoquinol + NAD(+) + n H(+)(out). It catalyses the reaction a plastoquinone + NADPH + (n+1) H(+)(in) = a plastoquinol + NADP(+) + n H(+)(out). NDH shuttles electrons from NAD(P)H:plastoquinone, via FMN and iron-sulfur (Fe-S) centers, to quinones in the photosynthetic chain and possibly in a chloroplast respiratory chain. The immediate electron acceptor for the enzyme in this species is believed to be plastoquinone. Couples the redox reaction to proton translocation, and thus conserves the redox energy in a proton gradient. This Ceratophyllum demersum (Rigid hornwort) protein is NAD(P)H-quinone oxidoreductase subunit 3, chloroplastic.